The sequence spans 364 residues: MSHNSFGHLFRVTTWGESHGPALGAVVDGCPPGLKFTLEDLQVWLDKRKPGQSRFVTQRREDDLVKVLSGVMPQDDGSMITTGTPISLMIENTDQRSKDYGEIAQQYRPGHADYTYDLKYGIRDYRGGGRSSARETAARVAAGGIARLVLPGVTIRGALVQIGTHKIDRANWDWSEVDNNPFFAPDPKIVPVWEDYLDQIRKQGSSVGAVVEVVAEGVPAGLGAPIYAKLDQDITALLMSINAVKGVEIGNGFGAAEITGEENADQMRMGNDGQPIFLSNHAGGILGGISTGEPIVARFAIKPTSSILTERQSIDSQGRNVDIRTKGRHDPCVGIRAVPVGEAMVACALADHYLRDRGQTGRLK.

Residues arginine 48 and arginine 54 each coordinate NADP(+). Residues 130–132 (RSS), 242–243 (NA), glycine 287, 302–306 (KPTSS), and arginine 328 each bind FMN.

It belongs to the chorismate synthase family. Homotetramer. It depends on FMNH2 as a cofactor.

The catalysed reaction is 5-O-(1-carboxyvinyl)-3-phosphoshikimate = chorismate + phosphate. The protein operates within metabolic intermediate biosynthesis; chorismate biosynthesis; chorismate from D-erythrose 4-phosphate and phosphoenolpyruvate: step 7/7. In terms of biological role, catalyzes the anti-1,4-elimination of the C-3 phosphate and the C-6 proR hydrogen from 5-enolpyruvylshikimate-3-phosphate (EPSP) to yield chorismate, which is the branch point compound that serves as the starting substrate for the three terminal pathways of aromatic amino acid biosynthesis. This reaction introduces a second double bond into the aromatic ring system. The polypeptide is Chorismate synthase (Allorhizobium ampelinum (strain ATCC BAA-846 / DSM 112012 / S4) (Agrobacterium vitis (strain S4))).